A 357-amino-acid polypeptide reads, in one-letter code: Peptide chain release factor 1 (357 aa).

Position 232 is an N5-methylglutamine (Gln-232).

This sequence belongs to the prokaryotic/mitochondrial release factor family. In terms of processing, methylated by PrmC. Methylation increases the termination efficiency of RF1.

It localises to the cytoplasm. Functionally, peptide chain release factor 1 directs the termination of translation in response to the peptide chain termination codons UAG and UAA. The polypeptide is Peptide chain release factor 1 (Nitratidesulfovibrio vulgaris (strain ATCC 29579 / DSM 644 / CCUG 34227 / NCIMB 8303 / VKM B-1760 / Hildenborough) (Desulfovibrio vulgaris)).